The following is a 242-amino-acid chain: Prosalusin (242 aa).

Positions 1–26 (MAAATRGCRPWGSLLGLLGLVSAAAA) are cleaved as a signal peptide. Residues 27 to 189 (AWDLASLRCT…SSWVVYGTNY (163 aa)) constitute a propeptide that is removed on maturation. Position 93–100 (93–100 (GWTGTGKS)) interacts with ATP. Asparagine 149 carries an N-linked (GlcNAc...) asparagine glycan. Positions 210–242 (PPRRSGALPPAPAAPRPALRAQRAGPAGPGAKG) are disordered. A compositionally biased stretch (low complexity) spans 225 to 235 (RPALRAQRAGP). Lysine 241 is modified (lysine amide).

The protein belongs to the ClpA/ClpB family. Torsin subfamily. Post-translationally, amidation of salusin-alpha(29-Gly) by peptidylglycine alpha-amidating monooxygenase, PAM, converts Lys-241-Gly-242 to Lys-241-NH2 and gives raise to salusin-alpha. As to expression, isoform 4 is ubiquitously expressed, with high level in vascular endothelial cells and vascular smooth muscle cells.

The protein resides in the secreted. Salusins -alpha and -beta may be endocrine and/or paracrine factors able to increase intracellular calcium concentrations and induce cell mitogenesis. Salusins may also be potent hypotensive peptides. The polypeptide is Prosalusin (TOR2A) (Homo sapiens (Human)).